A 1491-amino-acid chain; its full sequence is Copper-transporting ATPase 1 (1491 aa).

The Cytoplasmic segment spans residues 1-644; that stretch reads MEPSVDANSI…KREIKQWRGS (644 aa). HMA domains lie at 8–74 and 85–151; these read NSIT…FDAL and TNTV…LDMG. 3 residues coordinate Cu(+): T18, C19, and C22. Phosphothreonine is present on T152. The region spanning 171 to 237 is the HMA 3 domain; sequence VMLKMKVEGM…QIEAVGFPAF (67 aa). Cu(+) is bound by residues C182 and C185. Phosphoserine is present on S270. In terms of domain architecture, HMA 4 spans 277–343; that stretch reads STTMFTIEGM…AIEAISPGQY (67 aa). Residues C288 and C291 each contribute to the Cu(+) site. T327 carries the phosphothreonine modification. Residues S339, S353, S357, and S362 each carry the phosphoserine modification. 3 HMA domains span residues 377–443, 479–545, and 555–621; these read QEAV…FDAA, NKCY…FGAM, and GILE…FEAS. Positions 388, 391, 490, 493, 566, and 569 each coordinate Cu(+). The helical transmembrane segment at 645-666 threads the bilayer; it reads FLVSLFFCIPVMGLMVYMMVMD. Over 667–705 the chain is Extracellular; that stretch reads HHLATLHHNQNMSNEEMINMHSAMFLERQILPGLSIMNL. N-linked (GlcNAc...) asparagine glycosylation occurs at N677. The helical transmembrane segment at 706 to 725 threads the bilayer; the sequence is LSLLLCLPVQFCGGWYFYIQ. The Cytoplasmic portion of the chain corresponds to 726–732; sequence AYKALKH. The chain crosses the membrane as a helical span at residues 733–753; sequence KTANMDVLIVLATTIAFAYSL. Over 754-772 the chain is Extracellular; it reads VILLVAMFERAKVNPITFF. A helical membrane pass occupies residues 773 to 793; the sequence is DTPPMLFVFIALGRWLEHIAK. Residues 794–926 lie on the Cytoplasmic side of the membrane; the sequence is GKTSEALAKL…SKAPIQQFAD (133 aa). A helical transmembrane segment spans residues 927 to 950; that stretch reads KLSGYFVPFIVLVSIVTLLVWIII. Residues 951–980 lie on the Extracellular side of the membrane; sequence GFQNFEIVETYFPGYNRSISRTETIIRFAF. An N-linked (GlcNAc...) asparagine glycan is attached at N966. A helical membrane pass occupies residues 981 to 1002; that stretch reads QASITVLCIACPCSLGLATPTA. Residues 1003 to 1347 are Cytoplasmic-facing; sequence VMVGTGVGAQ…LSRKTVKRIR (345 aa). Catalysis depends on D1035, which acts as the 4-aspartylphosphate intermediate. E1072 contacts ATP. T1203 carries the phosphothreonine modification. Mg(2+) is bound by residues D1292 and D1296. Residues 1348-1365 traverse the membrane as a helical segment; sequence INFVFALIYNLVGIPIAA. The Extracellular segment spans residues 1366–1376; that stretch reads GVFLPIGLVLQ. The chain crosses the membrane as a helical span at residues 1377–1396; it reads PWMGSAAMAASSVSVVLSSL. Topologically, residues 1397–1491 are cytoplasmic; it reads FLKLYRKPTY…DFREDDDTTL (95 aa). S1421, S1423, S1451, S1454, and S1457 each carry phosphoserine. The short motif at 1458 to 1459 is the Endocytosis signal element; the sequence is LL. S1460, S1464, S1467, and S1477 each carry phosphoserine. The segment at 1477–1491 is PDZD11-binding; the sequence is SLLVGDFREDDDTTL. The Endocytosis signal motif lies at 1478–1479; sequence LL.

This sequence belongs to the cation transport ATPase (P-type) (TC 3.A.3) family. Type IB subfamily. As to quaternary structure, monomer. Interacts with PDZD11. Interacts with ATOX1 and COMMD1. Interacts with TYRP1. Directly interacts with SOD3; this interaction is copper-dependent and is required for SOD3 activity. Widely expressed. Highly expressed in pituitary endocrine cells. Expressed in melanocytes (at protein level). Expressed in motor neuron (at protein level). Expressed in hippocampal neuron (at protein level). In the kidney, it is detected in the proximal and distal tubules (at protein level). Expressed in aorta (at protein level).

It localises to the golgi apparatus. It is found in the trans-Golgi network membrane. Its subcellular location is the cell membrane. The protein resides in the melanosome membrane. The protein localises to the early endosome membrane. It localises to the cell projection. It is found in the axon. Its subcellular location is the dendrite. The protein resides in the postsynaptic density. The catalysed reaction is Cu(+)(in) + ATP + H2O = Cu(+)(out) + ADP + phosphate + H(+). Functionally, ATP-driven copper (Cu(+)) ion pump that plays an important role in intracellular copper ion homeostasis. Within a catalytic cycle, acquires Cu(+) ion from donor protein on the cytoplasmic side of the membrane and delivers it to acceptor protein on the lumenal side. The transfer of Cu(+) ion across the membrane is coupled to ATP hydrolysis and is associated with a transient phosphorylation that shifts the pump conformation from inward-facing to outward-facing state. Under physiological conditions, at low cytosolic copper concentration, it is localized at the trans-Golgi network (TGN) where it transfers Cu(+) ions to cuproenzymes of the secretory pathway. Upon elevated cytosolic copper concentrations, it relocalizes to the plasma membrane where it is responsible for the export of excess Cu(+) ions. May play a dual role in neuron function and survival by regulating cooper efflux and neuronal transmission at the synapse as well as by supplying Cu(+) ions to enzymes such as PAM, TYR and SOD3. In the melanosomes of pigmented cells, provides copper cofactor to TYR to form an active TYR holoenzyme for melanin biosynthesis. In Mus musculus (Mouse), this protein is Copper-transporting ATPase 1.